A 565-amino-acid chain; its full sequence is Proline--tRNA ligase (565 aa).

The protein belongs to the class-II aminoacyl-tRNA synthetase family. ProS type 1 subfamily. Homodimer.

Its subcellular location is the cytoplasm. It catalyses the reaction tRNA(Pro) + L-proline + ATP = L-prolyl-tRNA(Pro) + AMP + diphosphate. Functionally, catalyzes the attachment of proline to tRNA(Pro) in a two-step reaction: proline is first activated by ATP to form Pro-AMP and then transferred to the acceptor end of tRNA(Pro). As ProRS can inadvertently accommodate and process non-cognate amino acids such as alanine and cysteine, to avoid such errors it has two additional distinct editing activities against alanine. One activity is designated as 'pretransfer' editing and involves the tRNA(Pro)-independent hydrolysis of activated Ala-AMP. The other activity is designated 'posttransfer' editing and involves deacylation of mischarged Ala-tRNA(Pro). The misacylated Cys-tRNA(Pro) is not edited by ProRS. In Lactobacillus helveticus (strain DPC 4571), this protein is Proline--tRNA ligase.